A 243-amino-acid chain; its full sequence is Voltage-gated monoatomic cation channel TMEM109 (243 aa).

A signal peptide spans 1–33; sequence MAGSGSSAPWGKHLLHAVLMVLVALVLLHSALA. Over 34 to 83 the chain is Lumenal; it reads QSHRDFAPPGQQRREAPVDLLTQIGRSVRETLDTWIGPETMHLISETLSQ. A helical membrane pass occupies residues 84-104; the sequence is VMWAISSAISVAFFALSGIAA. Over 105-135 the chain is Cytoplasmic; sequence QLLTALGLDGDHLTQGLKLSPSQVQTFLLWG. Residues 136–156 form a helical membrane-spanning segment; it reads AGALVVYWLLSLLLGLVLAVL. Over 157–185 the chain is Lumenal; the sequence is GRILGGLKLVIFLAGFVALVRSVPDPSTR. A helical transmembrane segment spans residues 186 to 205; sequence ALLLLALLTLYALLSRLTGS. The Cytoplasmic portion of the chain corresponds to 206–243; that stretch reads RASGAQLEAKVRGLERQVDELRWRQRRAAKGARSVEEE.

Homooligomer. Interacts with CRYAB; in the cellular response to DNA damage. Post-translationally, the N-terminus is blocked. In terms of tissue distribution, widely expressed. Expressed in skeletal, cardiac and smooth muscle cells, in brain, including neuroglial cells, cerebral cortex neurons and cerebellum, but not Purkinje cells. Also detected in Paneth and Goblet cells of the small intestine (but not in the epithelium), duodenal gland, pancreas, parotid gland, testis, thyroid gland and adrenal gland, as well as in epidermis, choroid plexus, ductus epididymidis, lymphocytes, fibroblasts, endothelial cells and seminiferous epithelial cells (at protein level). Not detected in mucous cells of the duodenal gland, in hepatocytes nor in uriniferous tubules.

The protein resides in the nucleus outer membrane. It localises to the endoplasmic reticulum membrane. The protein localises to the sarcoplasmic reticulum membrane. The enzyme catalyses K(+)(in) = K(+)(out). The catalysed reaction is Ca(2+)(in) = Ca(2+)(out). Functions as a voltage-gated monoatomic cation channel permeable to both potassium and calcium. Plays a role in the cellular response to DNA damage. The polypeptide is Voltage-gated monoatomic cation channel TMEM109 (Oryctolagus cuniculus (Rabbit)).